The following is a 122-amino-acid chain: Large ribosomal subunit protein uL14 (122 aa).

It belongs to the universal ribosomal protein uL14 family. As to quaternary structure, part of the 50S ribosomal subunit. Forms a cluster with proteins L3 and L19. In the 70S ribosome, L14 and L19 interact and together make contacts with the 16S rRNA in bridges B5 and B8.

Functionally, binds to 23S rRNA. Forms part of two intersubunit bridges in the 70S ribosome. The chain is Large ribosomal subunit protein uL14 from Bacillus mycoides (strain KBAB4) (Bacillus weihenstephanensis).